The following is a 91-amino-acid chain: Small membrane A-kinase anchor protein (91 aa).

The N-myristoyl glycine moiety is linked to residue G2.

It belongs to the small membrane AKAP family. In terms of processing, may be palmitoylated at Cys-3.

Its subcellular location is the cell membrane. Binds to type I regulatory subunits of protein kinase A and may anchor/target them to the plasma membrane. The chain is Small membrane A-kinase anchor protein from Xenopus tropicalis (Western clawed frog).